A 478-amino-acid chain; its full sequence is MQVTETTSEGLKREFQVLLPANELEDRLNTELSNIKGKVQIKGFRPGKVPVAHLRKVYGKSVMADVLQNAVNEANQQIVSDKGLRLALEPQIEFPKDEEQTIIERALDAKGDLAFKVKLEVLPSFELADLSDVSIKKLVLKPSDEEVNETLERMAKDSRSFEPREEGAEAQSGDRVTIDFVGRIDGTEFEGGKGEDVDLELGSNTFIPGFEDQLVGAKVGDARLVKVAFPADYQAEQLAGKDAEFDVTVKAVAAPGETKIDDELAKRFGMDDLEKLKEAVSKAVGADYEAQSRRKLKKELLDALDGKYAFDLPPSLVHQEFAAVWAQVEQDLKNRGKTFEDEGTTEEASQAEYRKIAERRVRLGLVLAQVGETADIKVSDDEVNQALFARIRQFPGQEKQVYDFYRNNPQALAELRAPLFEEKVVDHVLGQVQVVEEPVSKEALFAEDDEADAVTGAAATDEKPSESSNEAAADKAAG.

Basic and acidic residues predominate over residues 154–167; the sequence is MAKDSRSFEPREEG. Disordered stretches follow at residues 154 to 173 and 444 to 478; these read MAKD…AQSG and LFAE…KAAG. Positions 173–258 constitute a PPIase FKBP-type domain; it reads GDRVTIDFVG…VKAVAAPGET (86 aa).

It belongs to the FKBP-type PPIase family. Tig subfamily.

It is found in the cytoplasm. It catalyses the reaction [protein]-peptidylproline (omega=180) = [protein]-peptidylproline (omega=0). In terms of biological role, involved in protein export. Acts as a chaperone by maintaining the newly synthesized protein in an open conformation. Functions as a peptidyl-prolyl cis-trans isomerase. In Methylorubrum populi (strain ATCC BAA-705 / NCIMB 13946 / BJ001) (Methylobacterium populi), this protein is Trigger factor.